Here is a 452-residue protein sequence, read N- to C-terminus: Tubulin alpha-8 chain (452 aa).

Residues Q15, E74, S143, G147, T148, T182, N209, and N231 each coordinate GTP. A Mg(2+)-binding site is contributed by E74. The active site involves E257.

This sequence belongs to the tubulin family. In terms of assembly, dimer of alpha and beta chains. A typical microtubule is a hollow water-filled tube with an outer diameter of 25 nm and an inner diameter of 15 nM. Alpha-beta heterodimers associate head-to-tail to form protofilaments running lengthwise along the microtubule wall with the beta-tubulin subunit facing the microtubule plus end conferring a structural polarity. Microtubules usually have 13 protofilaments but different protofilament numbers can be found in some organisms and specialized cells. Mg(2+) serves as cofactor.

The protein localises to the cytoplasm. It is found in the cytoskeleton. It catalyses the reaction GTP + H2O = GDP + phosphate + H(+). Functionally, tubulin is the major constituent of microtubules, a cylinder consisting of laterally associated linear protofilaments composed of alpha- and beta-tubulin heterodimers. Microtubules grow by the addition of GTP-tubulin dimers to the microtubule end, where a stabilizing cap forms. Below the cap, tubulin dimers are in GDP-bound state, owing to GTPase activity of alpha-tubulin. In Caenorhabditis elegans, this protein is Tubulin alpha-8 chain (tba-8).